The primary structure comprises 273 residues: 4-hydroxy-tetrahydrodipicolinate reductase (273 aa).

NAD(+) is bound by residues 8 to 13 (GAAGRM), glutamate 34, 102 to 104 (GTT), and 128 to 131 (SSNM). Histidine 160 functions as the Proton donor/acceptor in the catalytic mechanism. Residue histidine 161 coordinates (S)-2,3,4,5-tetrahydrodipicolinate. Lysine 164 acts as the Proton donor in catalysis. Residue 170 to 171 (GT) participates in (S)-2,3,4,5-tetrahydrodipicolinate binding.

This sequence belongs to the DapB family.

It localises to the cytoplasm. The enzyme catalyses (S)-2,3,4,5-tetrahydrodipicolinate + NAD(+) + H2O = (2S,4S)-4-hydroxy-2,3,4,5-tetrahydrodipicolinate + NADH + H(+). The catalysed reaction is (S)-2,3,4,5-tetrahydrodipicolinate + NADP(+) + H2O = (2S,4S)-4-hydroxy-2,3,4,5-tetrahydrodipicolinate + NADPH + H(+). The protein operates within amino-acid biosynthesis; L-lysine biosynthesis via DAP pathway; (S)-tetrahydrodipicolinate from L-aspartate: step 4/4. Its function is as follows. Catalyzes the conversion of 4-hydroxy-tetrahydrodipicolinate (HTPA) to tetrahydrodipicolinate. The polypeptide is 4-hydroxy-tetrahydrodipicolinate reductase (Methanobrevibacter smithii (strain ATCC 35061 / DSM 861 / OCM 144 / PS)).